A 255-amino-acid polypeptide reads, in one-letter code: Glutamate racemase (255 aa).

Substrate is bound by residues 7–8 and 39–40; these read DS and YG. C70 acts as the Proton donor/acceptor in catalysis. 71-72 contributes to the substrate binding site; sequence NT. Catalysis depends on C181, which acts as the Proton donor/acceptor. A substrate-binding site is contributed by 182–183; sequence TH.

The protein belongs to the aspartate/glutamate racemases family.

It catalyses the reaction L-glutamate = D-glutamate. The protein operates within cell wall biogenesis; peptidoglycan biosynthesis. Its function is as follows. Provides the (R)-glutamate required for cell wall biosynthesis. In Helicobacter pylori (strain Shi470), this protein is Glutamate racemase.